Reading from the N-terminus, the 493-residue chain is Transcript termination protein A18 (493 aa).

Residues 100 to 256 (MIESKRPLYI…NSIINIAKLS (157 aa)) enclose the Helicase ATP-binding domain. 113–120 (LACGFGKT) provides a ligand contact to ATP. Residues 206–209 (DESH) carry the DESH box motif.

This sequence belongs to the helicase family. Poxviruses subfamily. In terms of assembly, interacts with G2. Might be part of a transcription complex composed at least of G2, A18, and H5.

The protein localises to the virion. Its function is as follows. DNA helicase which seems to act as a postreplicative transcription termination factor. Involved in ATP-dependent release of nascent RNA. Forms a stable complex with single-stranded DNA, and to a lesser extent RNA. The chain is Transcript termination protein A18 from Rabbitpox virus (strain Utrecht) (RPV).